The sequence spans 101 residues: Small ribosomal subunit protein bS18c (101 aa).

This sequence belongs to the bacterial ribosomal protein bS18 family. Part of the 30S ribosomal subunit.

The protein localises to the plastid. The protein resides in the chloroplast. The protein is Small ribosomal subunit protein bS18c of Coffea arabica (Arabian coffee).